The primary structure comprises 223 residues: Twisted gastrulation protein homolog 1 (223 aa).

A signal peptide spans 1-25; sequence MKLHYVAVLTLAILMFLTWLPASLS. N-linked (GlcNAc...) asparagine glycosylation is found at Asn52 and Asn81.

The protein belongs to the twisted gastrulation protein family. In terms of assembly, interacts with CHRD and BMP4. This interaction enhances CHRD/BMP4 complex formation. Interacts with BMP7.

It localises to the secreted. In terms of biological role, may be involved in dorsoventral axis formation. Seems to antagonize BMP signaling by forming ternary complexes with CHRD and BMPs, thereby preventing BMPs from binding to their receptors. In addition to the anti-BMP function, also has pro-BMP activity, partly mediated by cleavage and degradation of CHRD, which releases BMPs from ternary complexes. May be an important modulator of BMP-regulated cartilage development and chondrocyte differentiation. May play a role in thymocyte development. This is Twisted gastrulation protein homolog 1 (TWSG1) from Pongo abelii (Sumatran orangutan).